The primary structure comprises 660 residues: MSKEQKTFYLTTPIYYPSDKLHIGHAYTTVAGDAMARYKRLRGYNVMYLTGTDEHGQKIEQKAEAKGLTPKQFVDEIVSGIQDLWKKLDISYDDFIRTTEERHIKVVQQIFEQLLDQGDIYLGDYEGWYSIPDETFYTETQLVDKEYDADGNLIGGKSPDSGHPVEKVREQSYFFRMSKYADRLLQFYEENPQFIQPESRKNEMINNFIKPGLEDLAVSRTSFTWGVPVPRDPKHVVYVWIDALSNYITALGYGSDQQEKYENYWPADVHLVGKEIVRFHTIYWPIMLMALDLPLPKKVFGHGWLLMKDGKMSKSKGNVVDPVPLIDRYGLDALRYYLLREVPFGSDGVFTPEAFVERVNYDLANDLGNLLNRTVAMIEKYFDGKIPSYVKDGTPFDADLVELVYSTVKKVEDAMEEMEFSIALTAIGQLISRTNKYIDETQPWVLAKDESKREQLGAAMYHLAESIRYVSVLLQPFMTKAPQKIWEQLGIDSSLTTWESLETFGQIPGNTNVQKGQPLFPRLDVEEEVAHIKSLMGGSKKPEEAPKDEKEESDEITIDDFSKVELRIAEVIDAEPVKKADRLLKIQLDLGYEKRQVVSGIAKYYSPSDLIGKKVICVTNLKPVKLRGELSQGMILAGSEGDQLRLATVDGALPNGSLVK.

Residues 15 to 25 carry the 'HIGH' region motif; the sequence is YYPSDKLHIGH. The short motif at 311 to 315 is the 'KMSKS' region element; that stretch reads KMSKS. Residue Lys-314 coordinates ATP. Residues 535–554 are disordered; that stretch reads LMGGSKKPEEAPKDEKEESD. The span at 540–550 shows a compositional bias: basic and acidic residues; sequence KKPEEAPKDEK. Positions 560–660 constitute a tRNA-binding domain; that stretch reads DFSKVELRIA…GALPNGSLVK (101 aa).

The protein belongs to the class-I aminoacyl-tRNA synthetase family. MetG type 2B subfamily. Homodimer.

It localises to the cytoplasm. The enzyme catalyses tRNA(Met) + L-methionine + ATP = L-methionyl-tRNA(Met) + AMP + diphosphate. Its function is as follows. Is required not only for elongation of protein synthesis but also for the initiation of all mRNA translation through initiator tRNA(fMet) aminoacylation. The chain is Methionine--tRNA ligase (metG) from Halalkalibacterium halodurans (strain ATCC BAA-125 / DSM 18197 / FERM 7344 / JCM 9153 / C-125) (Bacillus halodurans).